Reading from the N-terminus, the 502-residue chain is ATP synthase subunit alpha (502 aa).

169–176 (GDRQTGKT) serves as a coordination point for ATP.

Belongs to the ATPase alpha/beta chains family. In terms of assembly, F-type ATPases have 2 components, CF(1) - the catalytic core - and CF(0) - the membrane proton channel. CF(1) has five subunits: alpha(3), beta(3), gamma(1), delta(1), epsilon(1). CF(0) has three main subunits: a(1), b(2) and c(9-12). The alpha and beta chains form an alternating ring which encloses part of the gamma chain. CF(1) is attached to CF(0) by a central stalk formed by the gamma and epsilon chains, while a peripheral stalk is formed by the delta and b chains.

The protein localises to the cell membrane. It carries out the reaction ATP + H2O + 4 H(+)(in) = ADP + phosphate + 5 H(+)(out). In terms of biological role, produces ATP from ADP in the presence of a proton gradient across the membrane. The alpha chain is a regulatory subunit. The sequence is that of ATP synthase subunit alpha from Priestia megaterium (strain ATCC 12872 / QMB1551) (Bacillus megaterium).